The sequence spans 878 residues: Indoleacetate decarboxylase (878 aa).

The region spanning 42–750 is the PFL domain; the sequence is DRTKRMKERF…VTGATPDGRL (709 aa). Catalysis depends on C500, which acts as the Cysteine radical intermediate. E502 acts as the Proton acceptor in catalysis. Residues 758 to 878 enclose the Glycine radical domain; the sequence is GILSASPGTD…VIARTEYDAL (121 aa). G853 carries the glycine radical modification.

Belongs to the glycyl radical enzyme (GRE) family. In terms of assembly, homodimer (predominantly) and monomer. Post-translationally, requires the activating protein OsIADAE to generate the key active site glycyl radical on Gly-853 that is involved in catalysis.

The catalysed reaction is (indol-3-yl)acetate + H(+) = skatole + CO2. It participates in amino-acid degradation. Its function is as follows. Glycyl radical enzyme that catalyzes the terminal step of tryptophan fermentation, the decarboxylation of indoleacetate to form skatole, a malodorous compound that contributes to the characteristic smell of animal feces. No activity is detected with phenylacetate or p-hydroxyphenylacetate as substrates, indicating high substrate specificity. The sequence is that of Indoleacetate decarboxylase from Tractidigestivibacter scatoligenes (Olsenella scatoligenes).